A 465-amino-acid chain; its full sequence is Gamma-aminobutyric acid receptor subunit rho-2 (465 aa).

A signal peptide spans 1–20; it reads MPYFTRLILFLFCLMVLVES. Over 21 to 260 the chain is Extracellular; the sequence is RKPKRKRWTG…LYINFTLRRH (240 aa). Residue R105 coordinates 4-aminobutanoate. N120 carries N-linked (GlcNAc...) asparagine glycosylation. Position 169 (S169) interacts with 4-aminobutanoate. A disulfide bridge connects residues C178 and C192. E197 is a binding site for 4-aminobutanoate. A glycan (N-linked (GlcNAc...) asparagine) is linked at N254. Residues 261–281 traverse the membrane as a helical segment; it reads IFFFLLQTYFPATLMVMLSWV. Over 282 to 293 the chain is Cytoplasmic; the sequence is SFWIDRRAVPAR. The chain crosses the membrane as a helical span at residues 294-314; it reads VSLGITTVLTMTTIITGVNAS. Topologically, residues 315–325 are extracellular; sequence MPRVSYVKAVD. Residues 326–346 traverse the membrane as a helical segment; sequence IYLWVSFVFVFLSVLEYAAVN. Residues 347 to 443 are Cytoplasmic-facing; the sequence is YLTTVQERKE…IFQNTHAIDK (97 aa). A helical transmembrane segment spans residues 444 to 464; it reads YSRLIFPASYIFFNLIYWSVF. S465 is a topological domain (extracellular).

It belongs to the ligand-gated ion channel (TC 1.A.9) family. Gamma-aminobutyric acid receptor (TC 1.A.9.5) subfamily. GABRR2 sub-subfamily. As to quaternary structure, three rho subunits (rho-1/GBRR1, rho-2/GBRR2 and rho-3/GBRR3) coassemble either to form functional homopentamers or heteropentamers. Rho-2 is unable to form a functional homopentamer. Interacts with SQSTM1.

It localises to the postsynaptic cell membrane. The protein resides in the cell membrane. It carries out the reaction chloride(in) = chloride(out). Rho subunit of the pentameric ligand-gated chloride channels responsible for mediating the effects of gamma-aminobutyric acid (GABA), the major inhibitory neurotransmitter in the brain. Rho-containing GABA-gated chloride channels are a subclass of GABA(A) receptors (GABAARs) entirely composed of rho subunits, where GABA molecules bind at the rho intersubunit interfaces. When activated by GABA, rho-GABAARs selectively allow the flow of chloride anions across the cell membrane down their electrochemical gradient. Rho-2 GABAARs may contribute to the regulation of glial development in the cerebellum by controlling extrasynaptic transmission. Rho-2 GABAARs are also involved in neuronal tonic (extrasynaptic) and phasic (synaptic) transmission in the Purkinje neurons of the cerebellum. Rho-2 GABAARs expressed in retina may play a role in retinal neurotransmission. The sequence is that of Gamma-aminobutyric acid receptor subunit rho-2 from Homo sapiens (Human).